The chain runs to 196 residues: Auxin-induced protein 22B (196 aa).

The EAR-like (transcriptional repression) signature appears at 18 to 22; sequence LRLGL. Positions 44-74 are disordered; sequence RQVRETSQDSVSISKASHHQQHVETVSAPPP. A PB1 domain is found at 99-186; it reads GIFVKVSMDG…SCKRLRIMKG (88 aa).

The protein belongs to the Aux/IAA family. As to quaternary structure, homodimers and heterodimers.

It localises to the nucleus. In terms of biological role, aux/IAA proteins are short-lived transcriptional factors that function as repressors of early auxin response genes at low auxin concentrations. Repression is thought to result from the interaction with auxin response factors (ARFs), proteins that bind to the auxin-responsive promoter element (AuxRE). Formation of heterodimers with ARF proteins may alter their ability to modulate early auxin response genes expression. This is Auxin-induced protein 22B (AUX22B) from Vigna radiata var. radiata (Mung bean).